The sequence spans 910 residues: Leucine--tRNA ligase (910 aa).

A 'HIGH' region motif is present at residues Pro42–His52. Residues Thr658–Ser662 carry the 'KMSKS' region motif. Position 661 (Lys661) interacts with ATP.

Belongs to the class-I aminoacyl-tRNA synthetase family.

Its subcellular location is the cytoplasm. It catalyses the reaction tRNA(Leu) + L-leucine + ATP = L-leucyl-tRNA(Leu) + AMP + diphosphate. The protein is Leucine--tRNA ligase of Acidovorax sp. (strain JS42).